We begin with the raw amino-acid sequence, 366 residues long: Sperm equatorial segment protein 1 (366 aa).

The signal sequence occupies residues 1-18; it reads MKFLVLLVALLLWPSSLP. Residue Asn129 is glycosylated (N-linked (GlcNAc...) asparagine). Positions 139–204 are disordered; the sequence is PFIEKDEPEP…EDVPQLSGDN (66 aa). The segment covering 144–157 has biased composition (acidic residues); the sequence is DEPEPEPEPEPEPE. The span at 165–189 shows a compositional bias: polar residues; the sequence is APTQVPSVTEPSQDVTSLSGSTDLG.

This sequence belongs to the SPESP1 family. Glycosylated. In testis there are two predominant forms of 77- and 67-kDa and a form of 47-kDa, whereas in epididymal sperm from caput, corpus, and cauda there are two forms of 47- and 43-kDa. Testis forms contain complex carbohydrate residues. Epididymal sperm forms are N-glycosylated. Then undergoes significant glycosylation in the testis and that the majority of these glycoconjugates are removed by the time sperm reach the caput epididymis.

The protein resides in the cytoplasmic vesicle. The protein localises to the secretory vesicle. It is found in the acrosome. Involved in fertilization ability of sperm. This Bos taurus (Bovine) protein is Sperm equatorial segment protein 1.